We begin with the raw amino-acid sequence, 146 residues long: Large ribosomal subunit protein uL23m (146 aa).

The disordered stretch occupies residues 108–138 (PDLFPEKDPRSPEPLEEELPQQRQSSDLRCP). Residues 111–120 (FPEKDPRSPE) show a composition bias toward basic and acidic residues.

This sequence belongs to the universal ribosomal protein uL23 family. As to quaternary structure, component of the mitochondrial ribosome large subunit (39S) which comprises a 16S rRNA and about 50 distinct proteins.

Its subcellular location is the mitochondrion. This Mus musculus (Mouse) protein is Large ribosomal subunit protein uL23m (Mrpl23).